The chain runs to 1862 residues: Protein RRP5 homolog (1862 aa).

A disordered region spans residues 1-56 (MANLEESFPRGGTRKLHKSEKSSQQVVEQDNLFDVSTEEGPIKRKKSQKGPAKTKK). Position 2 is an N-acetylalanine (Ala2). Residue Ser7 is modified to Phosphoserine. A compositionally biased stretch (basic residues) spans 43 to 56 (KRKKSQKGPAKTKK). S1 motif domains are found at residues 83–171 (GMRI…LSVN), 187–258 (GMLL…LSVE), 281–346 (GLLV…LSLR), and 365–436 (GAVL…LSLR). The residue at position 438 (Ser438) is a Phosphoserine. 5 S1 motif domains span residues 453-522 (GTVV…MTLK), 542-611 (GLQT…LSFR), 636-707 (GQLV…LCRK), 729-798 (GMLL…LSLR), and 846-911 (GMVL…VSLH). The tract at residues 999–1036 (SKRTRMPVQRDSETVDDKGEEKEEEEEEEEKEEENLTV) is disordered. The segment covering 1006-1019 (VQRDSETVDDKGEE) has biased composition (basic and acidic residues). Residues 1020-1033 (KEEEEEEEEKEEEN) are compositionally biased toward acidic residues. S1 motif domains are found at residues 1047–1120 (GDKV…ISHP), 1160–1233 (GQTV…LSLI), 1241–1309 (GEVA…LSLR), and 1335–1407 (GQLL…LSLL). Disordered stretches follow at residues 1406–1520 (LLPS…STEV) and 1545–1577 (REES…KAEK). Composition is skewed to basic and acidic residues over residues 1423 to 1437 (PKQE…EGQK) and 1445 to 1454 (RREEKEEPQK). A Glycyl lysine isopeptide (Lys-Gly) (interchain with G-Cter in SUMO2) cross-link involves residue Lys1424. A phosphoserine mark is found at Ser1468 and Ser1490. Residues 1566 to 1577 (KERELEKQKAEK) are compositionally biased toward basic and acidic residues. HAT repeat units lie at residues 1590-1622 (GRQP…FHLQ), 1696-1728 (EKYK…FVLG), 1766-1798 (GDVE…MTIK), and 1800-1835 (GSQT…YEKQ).

In terms of assembly, interacts with NF-kappa-B p50/NFKB1 and NF-kappa-B p65/RELA. Ubiquitous.

It is found in the nucleus. Its subcellular location is the nucleolus. Its function is as follows. Essential for the generation of mature 18S rRNA, specifically necessary for cleavages at sites A0, 1 and 2 of the 47S precursor. Directly interacts with U3 snoRNA. In Mus musculus (Mouse), this protein is Protein RRP5 homolog (Pdcd11).